A 188-amino-acid chain; its full sequence is Pyridoxal 5'-phosphate synthase subunit PdxT (188 aa).

Glycine 47 to serine 49 provides a ligand contact to L-glutamine. The Nucleophile role is filled by cysteine 79. L-glutamine contacts are provided by residues arginine 106 and isoleucine 134–arginine 135. Catalysis depends on charge relay system residues histidine 169 and glutamate 171.

This sequence belongs to the glutaminase PdxT/SNO family. In the presence of PdxS, forms a dodecamer of heterodimers. Only shows activity in the heterodimer.

The enzyme catalyses aldehydo-D-ribose 5-phosphate + D-glyceraldehyde 3-phosphate + L-glutamine = pyridoxal 5'-phosphate + L-glutamate + phosphate + 3 H2O + H(+). It carries out the reaction L-glutamine + H2O = L-glutamate + NH4(+). The protein operates within cofactor biosynthesis; pyridoxal 5'-phosphate biosynthesis. In terms of biological role, catalyzes the hydrolysis of glutamine to glutamate and ammonia as part of the biosynthesis of pyridoxal 5'-phosphate. The resulting ammonia molecule is channeled to the active site of PdxS. The sequence is that of Pyridoxal 5'-phosphate synthase subunit PdxT from Caldicellulosiruptor bescii (strain ATCC BAA-1888 / DSM 6725 / KCTC 15123 / Z-1320) (Anaerocellum thermophilum).